Consider the following 181-residue polypeptide: Large ribosomal subunit protein uL5 (181 aa).

Belongs to the universal ribosomal protein uL5 family. Part of the 50S ribosomal subunit; part of the 5S rRNA/L5/L18/L25 subcomplex. Contacts the 5S rRNA and the P site tRNA. Forms a bridge to the 30S subunit in the 70S ribosome.

This is one of the proteins that bind and probably mediate the attachment of the 5S RNA into the large ribosomal subunit, where it forms part of the central protuberance. In the 70S ribosome it contacts protein S13 of the 30S subunit (bridge B1b), connecting the 2 subunits; this bridge is implicated in subunit movement. Contacts the P site tRNA; the 5S rRNA and some of its associated proteins might help stabilize positioning of ribosome-bound tRNAs. This is Large ribosomal subunit protein uL5 from Campylobacter jejuni subsp. doylei (strain ATCC BAA-1458 / RM4099 / 269.97).